We begin with the raw amino-acid sequence, 164 residues long: MPRSLRAELSKPYGVLFINENKLKQFLINKSNSRLITVGDVVTQTILKFHIKPFLAIVDGKTKRKLVKENFGQFEYIKVKNEPGLIRLSTIREIKDILVHNENDKILMVDGEEDLLVIPVVIYGNFGDIIIYGQPNAGVVVTLNNDFLKRRVLEIFKKFQVTSC.

6 residues coordinate GTP: Asp40, Val41, Val42, Asp59, Lys61, and Glu113.

The protein belongs to the GTP-dependent DPCK family.

The enzyme catalyses 3'-dephospho-CoA + GTP = GDP + CoA + H(+). It functions in the pathway cofactor biosynthesis; coenzyme A biosynthesis. Catalyzes the GTP-dependent phosphorylation of the 3'-hydroxyl group of dephosphocoenzyme A to form coenzyme A (CoA). The chain is GTP-dependent dephospho-CoA kinase from Sulfolobus acidocaldarius (strain ATCC 33909 / DSM 639 / JCM 8929 / NBRC 15157 / NCIMB 11770).